A 217-amino-acid polypeptide reads, in one-letter code: Uridylate kinase (217 aa).

An ATP-binding site is contributed by 6-10; the sequence is KISGR. Glycine 38 contributes to the UMP binding site. ATP-binding residues include glycine 39 and arginine 43. Residues aspartate 60 and 107–113 each bind UMP; that span reads FQPGQST. ATP-binding residues include asparagine 134, tyrosine 139, and aspartate 142.

The protein belongs to the UMP kinase family. In terms of assembly, homohexamer.

It localises to the cytoplasm. The catalysed reaction is UMP + ATP = UDP + ADP. Its pathway is pyrimidine metabolism; CTP biosynthesis via de novo pathway; UDP from UMP (UMPK route): step 1/1. Its activity is regulated as follows. Inhibited by UTP. Functionally, catalyzes the reversible phosphorylation of UMP to UDP. The sequence is that of Uridylate kinase from Pyrobaculum arsenaticum (strain DSM 13514 / JCM 11321 / PZ6).